Consider the following 66-residue polypeptide: UPF0337 protein RPA4217 (66 aa).

This sequence belongs to the UPF0337 (CsbD) family.

This chain is UPF0337 protein RPA4217, found in Rhodopseudomonas palustris (strain ATCC BAA-98 / CGA009).